A 161-amino-acid chain; its full sequence is Putative sporulation sigma factor-processing peptidase (161 aa).

Aspartate 38 is a catalytic residue.

This sequence belongs to the peptidase U4 family.

In terms of biological role, probably activates the RNA polymerase sigma-35 factor at the stage II of sporulation. This chain is Putative sporulation sigma factor-processing peptidase, found in Bacillus thuringiensis subsp. kurstaki.